Consider the following 76-residue polypeptide: Conotoxin VnMEKL-0111 (76 aa).

An N-terminal signal peptide occupies residues 1 to 18 (MKLTILFLVAAVLMSTQA). Positions 19-45 (LIQHDGEKSQKAKMKFLTARTLSAKTR) are excised as a propeptide. 3 disulfide bridges follow: Cys-49-Cys-65, Cys-56-Cys-70, and Cys-64-Cys-74.

Belongs to the conotoxin O2 superfamily. Expressed by the venom duct.

The protein localises to the secreted. This is Conotoxin VnMEKL-0111 from Conus ventricosus (Mediterranean cone).